We begin with the raw amino-acid sequence, 295 residues long: Small ribosomal subunit protein uS2 (295 aa).

The protein belongs to the universal ribosomal protein uS2 family. Component of the small ribosomal subunit. Mature ribosomes consist of a small (40S) and a large (60S) subunit. The 40S subunit contains about 33 different proteins and 1 molecule of RNA (18S). The 60S subunit contains about 49 different proteins and 3 molecules of RNA (25S, 5.8S and 5S). Interacts with RPS21.

It localises to the cytoplasm. Its function is as follows. Required for the assembly and/or stability of the 40S ribosomal subunit. Required for the processing of the 20S rRNA-precursor to mature 18S rRNA in a late step of the maturation of 40S ribosomal subunits. The sequence is that of Small ribosomal subunit protein uS2 from Paracoccidioides brasiliensis (strain Pb03).